A 115-amino-acid chain; its full sequence is Replication initiation control protein YabA (115 aa).

His-85, Cys-87, Cys-101, and Cys-104 together coordinate Zn(2+).

The protein belongs to the YabA family. Homotetramer. Interacts with both DnaA and DnaN, acting as a bridge between these two proteins. It depends on Zn(2+) as a cofactor.

The protein localises to the cytoplasm. The protein resides in the nucleoid. Functionally, involved in control of chromosome replication initiation. Inhibits the cooperative binding of DnaA to the oriC region, thus negatively regulating initiation of chromosome replication. Inhibits the ability of DnaA-ATP to form a helix on DNA; does not disassemble preformed DnaA-DNA helices. Decreases the residence time of DnaA on the chromosome at its binding sites (oriC, replication forks and promoter-binding sites). Tethers DnaA to the replication machinery via the DNA polymerase beta sliding clamp subunit (dnaN). Associates with oriC and other DnaA targets on the chromosome in a DnaA-dependent manner. The polypeptide is Replication initiation control protein YabA (Lactiplantibacillus plantarum (strain ATCC BAA-793 / NCIMB 8826 / WCFS1) (Lactobacillus plantarum)).